A 655-amino-acid polypeptide reads, in one-letter code: HDA1 complex subunit 3 (655 aa).

Residues 482 to 632 (HELEVENNLK…KTMDNLENLT (151 aa)) adopt a coiled-coil conformation. The interval 635–655 (RVRTQNGNTKKKSRAKKPGNV) is disordered. Positions 643–655 (TKKKSRAKKPGNV) are enriched in basic residues.

Belongs to the HDA2/3 family. HDA3 subfamily. In terms of assembly, heterodimer with HDA2. Component of the HDA1 histone deacetylase complex composed of at least one HDA1 homodimer and one HDA2/HDA3 heterodimer. Interacts with HDA1 and HDA3.

It localises to the nucleus. Required for activity of HDA1 histone deacetylase complex. The HDA1 histone deacetylase complex is responsible for the deacetylation of lysine residues on the N-terminal part of the core histones (H2A, H2B, H3 and H4). Histone deacetylation gives a tag for epigenetic repression and plays an important role in transcriptional regulation, cell cycle progression and developmental events. This Saccharomyces cerevisiae (strain ATCC 204508 / S288c) (Baker's yeast) protein is HDA1 complex subunit 3 (HDA3).